Here is a 198-residue protein sequence, read N- to C-terminus: Carnitine operon protein CaiE (198 aa).

The segment at 174 to 198 is disordered; sequence KPLTQAEENRPRLKGTTDVKPKSAQ. The segment covering 180-198 has biased composition (basic and acidic residues); sequence EENRPRLKGTTDVKPKSAQ.

The protein belongs to the transferase hexapeptide repeat family.

It participates in amine and polyamine metabolism; carnitine metabolism. In terms of biological role, overproduction of CaiE stimulates the activity of CaiB and CaiD. This is Carnitine operon protein CaiE from Salmonella dublin (strain CT_02021853).